The sequence spans 505 residues: MTEQIPAPQPPADENSLIAERRAKLGALRGQGIAYPNDFVREHFAGDLQAEFADADTWTPDALEASGRTVKMAGRLMAKRVMGKASFAQIQDESGRVQLFLQGNVLGDAYTAFKGWDVGDIVAVEGGLTRTKTGELSVKASALRLLTKSLRPLPDKWHGLSDVEQRYRQRYVDLIVTPEAREVFIKRSKIIRAMRAWLDARRFLEVETPMMHYIPGGATAKPFTTHHNALDLDLYLRVAPELYLKRLVVGGLERVYEINRNFRNEGVSTRHNPEFTMLELYEAYATYHEIMDLTEQVIRDTAQSVLGTTQVSWDGADIDLAPAFRRWRMDEAVRHHNPEISAADCTDRDALLRHCERLKIRVKPSYGWGKLLLEIFEATVEHTLVQPTFITDHPVEVSPLARSSDTEPGYTDRFELFINGKELANGFSELNDPEDQAARFQAQVQAKDGGDDEAMHFDADYIRALEYGMPPTGGLGIGIDRLVMLLTGSTSIRDVLLFPYMRPEA.

Mg(2+) contacts are provided by glutamate 415 and glutamate 422.

This sequence belongs to the class-II aminoacyl-tRNA synthetase family. In terms of assembly, homodimer. Mg(2+) is required as a cofactor.

It localises to the cytoplasm. The enzyme catalyses tRNA(Lys) + L-lysine + ATP = L-lysyl-tRNA(Lys) + AMP + diphosphate. The protein is Lysine--tRNA ligase of Xanthomonas oryzae pv. oryzae (strain MAFF 311018).